The chain runs to 369 residues: DNA replication and repair protein RecF (369 aa).

30–37 (GQNAQGKT) lines the ATP pocket.

The protein belongs to the RecF family.

The protein localises to the cytoplasm. Functionally, the RecF protein is involved in DNA metabolism; it is required for DNA replication and normal SOS inducibility. RecF binds preferentially to single-stranded, linear DNA. It also seems to bind ATP. The polypeptide is DNA replication and repair protein RecF (Acetivibrio thermocellus (strain ATCC 27405 / DSM 1237 / JCM 9322 / NBRC 103400 / NCIMB 10682 / NRRL B-4536 / VPI 7372) (Clostridium thermocellum)).